Here is a 1480-residue protein sequence, read N- to C-terminus: Cystic fibrosis transmembrane conductance regulator (1480 aa).

Topologically, residues 1–77 (MQRSPLEKAS…KLINALRRCF (77 aa)) are cytoplasmic. A helical transmembrane segment spans residues 78-98 (FWRFMFYGILLYLGEVTKAVQ). The region spanning 81–365 (FMFYGILLYL…WAVQTWYDSL (285 aa)) is the ABC transmembrane type-1 1 domain. The Extracellular portion of the chain corresponds to 99 to 122 (PLLLGRIIASYDPDNKTERSIAIY). The chain crosses the membrane as a helical span at residues 123–146 (LGIGLCLLFIVRTLLLHPAIFGLH). Residues 147 to 195 (HIGMQMRIAMFSLIYKKTLKLSSRVLDKISIGQLVSLLSNNLNKFDEGL) are Cytoplasmic-facing. The chain crosses the membrane as a helical span at residues 196-216 (ALAHFVWIAPLQVALLMGLIW). Topologically, residues 217-222 (ELLQAS) are extracellular. The helical transmembrane segment at 223–243 (VFCGLGFLIVLALFQAGLGRM) threads the bilayer. The Cytoplasmic portion of the chain corresponds to 244–298 (MMKYRDQRAGKINERLVITSEMIENIQSVKAYCWEEAMEKMIENLRQTELKLTRK). The chain crosses the membrane as a helical span at residues 299–319 (AAYVRYFNSSAFFFSGFFVVF). At 320–339 (LSVLPYALIKGIILRKIFTT) the chain is on the extracellular side. A helical transmembrane segment spans residues 340–358 (ISFCIVLRMAVTRQFPWAV). The Cytoplasmic portion of the chain corresponds to 359 to 858 (QTWYDSLGAI…YLRYITLHKS (500 aa)). ATP-binding positions include Trp401, Ser434, 458–465 (GSTGAGKT), and Gln493. One can recognise an ABC transporter 1 domain in the interval 423 to 646 (NGHDNLFFSN…RPDFSSKLMG (224 aa)). Residue Cys524 is the site of S-palmitoyl cysteine attachment. Residues Ser549 and Ser660 each carry the phosphoserine modification. The tract at residues 654-831 (SSERRNSILT…EEINEEDLKE (178 aa)) is disordered R region. Ser670 carries the phosphoserine; by PKA modification. Residue Ser686 is modified to Phosphoserine. Lys688 is covalently cross-linked (Glycyl lysine isopeptide (Lys-Gly) (interchain with G-Cter in ubiquitin)). Ser700 and Ser712 each carry phosphoserine. At Thr717 the chain carries Phosphothreonine. Residues Ser737, Ser753, Ser768, Ser790, Ser795, and Ser813 each carry the phosphoserine modification. Residues 859–879 (LIFVLIWCLVIFLAEVAASLV) traverse the membrane as a helical segment. The ABC transmembrane type-1 2 domain occupies 859-1155 (LIFVLIWCLV…AVNSSIDVDS (297 aa)). Topologically, residues 880 to 918 (VLWLLGNTSFQDKGNSTYSRNNSYAVIITNTSSYYVFYI) are extracellular. N-linked (GlcNAc...) asparagine glycans are attached at residues Asn894, Asn900, and Asn909. The chain crosses the membrane as a discontinuously helical span at residues 919–939 (YVGVADTLLALGFFRGLPLVH). The Cytoplasmic portion of the chain corresponds to 940-990 (TLITVSKILHHKMLHSVLQAPMSTLNTLKAGGILNRFSKDIAILDDLLPLT). The chain crosses the membrane as a helical span at residues 991-1011 (IFDFIQLLLIVIGAIAVVSVL). Residues 1012–1013 (QP) lie on the Extracellular side of the membrane. The helical transmembrane segment at 1014-1034 (YIFLATVPVIAAFILLRAYFL) threads the bilayer. Over 1035–1095 (QTSQQLKQLE…TANWFLYLST (61 aa)) the chain is Cytoplasmic. A helical membrane pass occupies residues 1096-1116 (LRWFQMRIEMIFVIFFIAVTF). The Extracellular portion of the chain corresponds to 1117 to 1130 (ISILTTGEGEGTVG). Residues 1131–1151 (IILTLAMNIMSTLQWAVNSSI) form a helical membrane-spanning segment. Topologically, residues 1152-1480 (DVDSLMRSVS…TEEEVQETRL (329 aa)) are cytoplasmic. The ABC transporter 2 domain occupies 1210 to 1443 (MTIKDLTAKY…KSLFQQAISH (234 aa)). ATP is bound by residues Tyr1219 and 1244-1251 (GRTGSGKS). The interaction with GORASP2 stretch occupies residues 1386-1480 (RALKQAFADC…TEEEVQETRL (95 aa)). Cys1395 carries S-palmitoyl cysteine lipidation. Phosphoserine is present on residues Ser1444 and Ser1456. Positions 1452-1480 (HRNSSKYKSRPQIASLKEETEEEVQETRL) are disordered. Residues 1470 to 1480 (ETEEEVQETRL) show a composition bias toward acidic residues. The short motif at 1478–1480 (TRL) is the PDZ-binding element.

This sequence belongs to the ABC transporter superfamily. ABCC family. CFTR transporter (TC 3.A.1.202) subfamily. Monomer; does not require oligomerization for channel activity. May form oligomers in the membrane. Interacts with SLC26A3, SLC26A6 and NHERF1. Interacts with SHANK2. Interacts with MYO6. Interacts (via C-terminus) with GOPC (via PDZ domain); this promotes CFTR internalization and thereby decreases channel activity. Interacts with SLC4A7 through NHERF1. Found in a complex with MYO5B and RAB11A. Interacts with ANO1. Interacts with SLC26A8. Interacts with AHCYL1; the interaction increases CFTR activity. Interacts with CSE1L. The core-glycosylated form interacts with GORASP2 (via PDZ GRASP-type 1 domain) in respone to ER stress. Interacts with MARCHF2; the interaction leads to CFTR ubiqtuitination and degradation. Interacts with ADGRG2. Post-translationally, N-glycosylated. Phosphorylated; cAMP treatment promotes phosphorylation and activates the channel. Dephosphorylation decreases the ATPase activity (in vitro). Phosphorylation at PKA sites activates the channel. Phosphorylation at PKC sites enhances the response to phosphorylation by PKA. Phosphorylated by AMPK; this inhibits channel activity. In terms of processing, ubiquitinated, leading to its degradation in the lysosome. Deubiquitination by USP10 in early endosomes enhances its endocytic recycling to the cell membrane. Ubiquitinated by RNF185 during ER stress. Ubiquitinated by MARCHF2.

Its subcellular location is the apical cell membrane. It is found in the early endosome membrane. The protein resides in the cell membrane. The protein localises to the recycling endosome membrane. It localises to the endoplasmic reticulum membrane. Its subcellular location is the nucleus. The catalysed reaction is ATP + H2O + closed Cl(-) channel = ADP + phosphate + open Cl(-) channel.. The enzyme catalyses chloride(in) = chloride(out). It catalyses the reaction hydrogencarbonate(in) = hydrogencarbonate(out). It carries out the reaction ATP + H2O = ADP + phosphate + H(+). In terms of biological role, epithelial ion channel that plays an important role in the regulation of epithelial ion and water transport and fluid homeostasis. Mediates the transport of chloride ions across the cell membrane. Possesses an intrinsic ATPase activity and utilizes ATP to gate its channel; the passive flow of anions through the channel is gated by cycles of ATP binding and hydrolysis by the ATP-binding domains. The ion channel is also permeable to HCO(3)(-); selectivity depends on the extracellular chloride concentration. Exerts its function also by modulating the activity of other ion channels and transporters. Contributes to the regulation of the pH and the ion content of the epithelial fluid layer. Modulates the activity of the epithelial sodium channel (ENaC) complex, in part by regulating the cell surface expression of the ENaC complex. May regulate bicarbonate secretion and salvage in epithelial cells by regulating the transporter SLC4A7. Can inhibit the chloride channel activity of ANO1. Plays a role in the chloride and bicarbonate homeostasis during sperm epididymal maturation and capacitation. This chain is Cystic fibrosis transmembrane conductance regulator, found in Plecturocebus moloch (Dusky titi monkey).